The following is a 427-amino-acid chain: 3-phosphoshikimate 1-carboxyvinyltransferase (427 aa).

Lys-22, Ser-23, and Arg-27 together coordinate 3-phosphoshikimate. Lys-22 contacts phosphoenolpyruvate. Positions 97 and 125 each coordinate phosphoenolpyruvate. Positions 171, 172, 173, 199, 315, 338, and 342 each coordinate 3-phosphoshikimate. Gln-173 is a binding site for phosphoenolpyruvate. Catalysis depends on Asp-315, which acts as the Proton acceptor. Residues Arg-346, Arg-388, and Lys-413 each contribute to the phosphoenolpyruvate site.

The protein belongs to the EPSP synthase family. In terms of assembly, monomer.

Its subcellular location is the cytoplasm. The catalysed reaction is 3-phosphoshikimate + phosphoenolpyruvate = 5-O-(1-carboxyvinyl)-3-phosphoshikimate + phosphate. It functions in the pathway metabolic intermediate biosynthesis; chorismate biosynthesis; chorismate from D-erythrose 4-phosphate and phosphoenolpyruvate: step 6/7. Its function is as follows. Catalyzes the transfer of the enolpyruvyl moiety of phosphoenolpyruvate (PEP) to the 5-hydroxyl of shikimate-3-phosphate (S3P) to produce enolpyruvyl shikimate-3-phosphate and inorganic phosphate. The chain is 3-phosphoshikimate 1-carboxyvinyltransferase from Aliivibrio salmonicida (strain LFI1238) (Vibrio salmonicida (strain LFI1238)).